Here is a 501-residue protein sequence, read N- to C-terminus: Glucans biosynthesis protein G (501 aa).

The first 25 residues, 1–25 (MNRRQVLTGLAALPLLQAKPDPAAA), serve as a signal peptide directing secretion.

The protein belongs to the OpgD/OpgG family.

It is found in the periplasm. Its pathway is glycan metabolism; osmoregulated periplasmic glucan (OPG) biosynthesis. Functionally, involved in the biosynthesis of osmoregulated periplasmic glucans (OPGs). This is Glucans biosynthesis protein G from Rhodopseudomonas palustris (strain ATCC BAA-98 / CGA009).